Reading from the N-terminus, the 117-residue chain is Large ribosomal subunit protein bL20c (117 aa).

The protein belongs to the bacterial ribosomal protein bL20 family.

It localises to the plastid. Its subcellular location is the chloroplast. Binds directly to 23S ribosomal RNA and is necessary for the in vitro assembly process of the 50S ribosomal subunit. It is not involved in the protein synthesizing functions of that subunit. This chain is Large ribosomal subunit protein bL20c, found in Platanus occidentalis (Sycamore).